The primary structure comprises 156 residues: Endoribonuclease YbeY (156 aa).

Zn(2+) is bound by residues His-114, His-118, and His-124.

Belongs to the endoribonuclease YbeY family. The cofactor is Zn(2+).

Its subcellular location is the cytoplasm. In terms of biological role, single strand-specific metallo-endoribonuclease involved in late-stage 70S ribosome quality control and in maturation of the 3' terminus of the 16S rRNA. This is Endoribonuclease YbeY from Sodalis glossinidius (strain morsitans).